Reading from the N-terminus, the 397-residue chain is RNA polymerase II elongation factor ELL3 (397 aa).

2 disordered regions span residues Val-164–Val-219 and Val-237–Ile-284. Over residues Leu-168–Gly-178 the composition is skewed to polar residues. Over residues Gln-250–Met-262 the composition is skewed to acidic residues. Over residues Ser-269–Pro-281 the composition is skewed to low complexity. The region spanning Pro-285–Arg-395 is the OCEL domain.

The protein belongs to the ELL/occludin family. As to quaternary structure, interacts with AFF4. Component of the super elongation complex (SEC), at least composed of EAF1, EAF2, CDK9, MLLT3/AF9, AFF (AFF1 or AFF4), the P-TEFb complex and ELL (ELL, ELL2 or ELL3). Component of the little elongation complex (LEC), at least composed of ELL (ELL, ELL2 or ELL3), ZC3H8, ICE1 and ICE2. As to expression, testis specific.

The protein resides in the nucleus. In terms of biological role, enhancer-binding elongation factor that specifically binds enhancers in embryonic stem cells (ES cells), marks them, and is required for their future activation during stem cell specification. Does not only bind to enhancer regions of active genes, but also marks the enhancers that are in a poised or inactive state in ES cells and is required for establishing proper RNA polymerase II occupancy at developmentally regulated genes in a cohesin-dependent manner. Probably required for priming developmentally regulated genes for later recruitment of the super elongation complex (SEC), for transcriptional activation during differentiation. Required for recruitment of P-TEFb within SEC during differentiation. Probably preloaded on germ cell chromatin, suggesting that it may prime gene activation by marking enhancers as early as in the germ cells. Promoting epithelial-mesenchymal transition (EMT). Elongation factor component of the super elongation complex (SEC), a complex required to increase the catalytic rate of RNA polymerase II transcription by suppressing transient pausing by the polymerase at multiple sites along the DNA. Component of the little elongation complex (LEC), a complex required to regulate small nuclear RNA (snRNA) gene transcription by RNA polymerase II and III. In Homo sapiens (Human), this protein is RNA polymerase II elongation factor ELL3 (ELL3).